The sequence spans 508 residues: Small ribosomal subunit protein uS3m (508 aa).

The protein belongs to the universal ribosomal protein uS3 family. In terms of assembly, component of the mitochondrial small ribosomal subunit (mt-SSU). Mature N.crassa 74S mitochondrial ribosomes consist of a small (37S) and a large (54S) subunit. The 37S small subunit contains a 16S ribosomal RNA (16S mt-rRNA) and 32 different proteins. The 54S large subunit contains a 23S rRNA (23S mt-rRNA) and 42 different proteins. uS3m, uS4m and uS5m form the narrow entry site of the mRNA channel.

Its subcellular location is the mitochondrion. Its function is as follows. Component of the mitochondrial ribosome (mitoribosome), a dedicated translation machinery responsible for the synthesis of mitochondrial genome-encoded proteins, including at least some of the essential transmembrane subunits of the mitochondrial respiratory chain. The mitoribosomes are attached to the mitochondrial inner membrane and translation products are cotranslationally integrated into the membrane. uS3m is essential for mitochondrial protein synthesis and required for the maturation of small ribosomal subunits. The protein is Small ribosomal subunit protein uS3m (var1) of Neurospora crassa (strain ATCC 24698 / 74-OR23-1A / CBS 708.71 / DSM 1257 / FGSC 987).